A 59-amino-acid polypeptide reads, in one-letter code: Small, acid-soluble spore protein H 1 (59 aa).

The protein belongs to the SspH family.

Its subcellular location is the spore core. In Bacillus cereus (strain ATCC 14579 / DSM 31 / CCUG 7414 / JCM 2152 / NBRC 15305 / NCIMB 9373 / NCTC 2599 / NRRL B-3711), this protein is Small, acid-soluble spore protein H 1 (sspH1).